Consider the following 3344-residue polypeptide: Genome polyprotein (3344 aa).

The Peptidase S30 domain occupies 408–547 (IVGNSKINYI…RSVYAKMDQY (140 aa)). Catalysis depends on for P1 proteinase activity residues histidine 456, aspartate 465, and serine 499. Residues 598–601 (KITC) carry the Involved in interaction with stylet and aphid transmission motif. Residues 856-858 (PTK) carry the Involved in virions binding and aphid transmission motif. The region spanning 882–1004 (MYIAKKGYCY…DSEMKHYIVG (123 aa)) is the Peptidase C6 domain. Active-site for helper component proteinase activity residues include cysteine 890 and histidine 963. Residues 1473–1625 (EIAHSPEREF…TQFPTKIVTE (153 aa)) enclose the Helicase ATP-binding domain. 1486–1493 (GAVGSGKS) lines the ATP pocket. The short motif at 1575-1578 (DECH) is the DECH box element. One can recognise a Helicase C-terminal domain in the interval 1644–1803 (DVTAFADNIL…GLPVMTHNVG (160 aa)). The Nuclear localization signal motif lies at 2134-2141 (KKGNKKGK). At tyrosine 2156 the chain carries O-(5'-phospho-RNA)-tyrosine. A Peptidase C4 domain is found at 2283–2499 (GKSLCQGMRN…LSWGALKVWE (217 aa)). Catalysis depends on for nuclear inclusion protein A activity residues histidine 2327, aspartate 2362, and cysteine 2431. Residues 2761-2885 (WVYCDADGSQ…AIHPDHEHVL (125 aa)) enclose the RdRp catalytic domain. Residues 3059–3093 (KNEAVDAGLNEKLKEKEKQKEKEKEKQKEKEKDGA) show a composition bias toward basic and acidic residues. The tract at residues 3059-3116 (KNEAVDAGLNEKLKEKEKQKEKEKEKQKEKEKDGASDGNDVSTSTKTGERDRDVNVGT) is disordered.

It belongs to the potyviridae genome polyprotein family. As to quaternary structure, interacts with host eIF4E protein (via cap-binding region); this interaction mediates the translation of the VPg-viral RNA conjugates. Part of a complex that comprises VPg, RNA, host EIF4E and EIF4G; this interaction mediates the translation of the VPg-viral RNA conjugates. In terms of processing, VPg is uridylylated by the polymerase and is covalently attached to the 5'-end of the genomic RNA. This uridylylated form acts as a nucleotide-peptide primer for the polymerase. Post-translationally, potyviral RNA is expressed as two polyproteins which undergo post-translational proteolytic processing. Genome polyprotein is processed by NIa-pro, P1 and HC-pro proteinases resulting in the production of at least ten individual proteins. P3N-PIPO polyprotein is cleaved by P1 and HC-pro proteinases resulting in the production of three individual proteins. The P1 proteinase and the HC-pro cleave only their respective C-termini autocatalytically. 6K1 is essential for proper proteolytic separation of P3 from CI.

The protein resides in the host cytoplasmic vesicle. It is found in the host nucleus. The protein localises to the virion. The catalysed reaction is RNA(n) + a ribonucleoside 5'-triphosphate = RNA(n+1) + diphosphate. It carries out the reaction Hydrolyzes glutaminyl bonds, and activity is further restricted by preferences for the amino acids in P6 - P1' that vary with the species of potyvirus, e.g. Glu-Xaa-Xaa-Tyr-Xaa-Gln-|-(Ser or Gly) for the enzyme from tobacco etch virus. The natural substrate is the viral polyprotein, but other proteins and oligopeptides containing the appropriate consensus sequence are also cleaved.. It catalyses the reaction Hydrolyzes a Gly-|-Gly bond at its own C-terminus, commonly in the sequence -Tyr-Xaa-Val-Gly-|-Gly, in the processing of the potyviral polyprotein.. Its function is as follows. Required for aphid transmission and also has proteolytic activity. Only cleaves a Gly-Gly dipeptide at its own C-terminus. Interacts with virions and aphid stylets. Acts as a suppressor of RNA-mediated gene silencing, also known as post-transcriptional gene silencing (PTGS), a mechanism of plant viral defense that limits the accumulation of viral RNAs. May have RNA-binding activity. Functionally, has helicase activity. It may be involved in replication. In terms of biological role, indispensable for virus replication. Mediates the cap-independent, EIF4E-dependent translation of viral genomic RNAs. Binds to the cap-binding site of host EIF4E and thus interferes with the host EIF4E-dependent mRNA export and translation. VPg-RNA directly binds EIF4E and is a template for transcription. Also forms trimeric complexes with EIF4E-EIF4G, which are templates for translation. Its function is as follows. Has RNA-binding and proteolytic activities. Functionally, an RNA-dependent RNA polymerase that plays an essential role in the virus replication. In terms of biological role, involved in aphid transmission, cell-to-cell and systemis movement, encapsidation of the viral RNA and in the regulation of viral RNA amplification. This chain is Genome polyprotein, found in Carica papaya (Papaya).